The chain runs to 389 residues: Phospho-N-acetylmuramoyl-pentapeptide-transferase (389 aa).

10 consecutive transmembrane segments (helical) span residues 25–45, 73–93, 97–117, 135–155, 190–210, 222–242, 258–278, 286–306, 311–331, and 366–386; these read RAVM…PWVI, TMGG…WADL, FIWI…VDDY, FWQT…VSEI, VSYP…IVGS, GLVI…AYVM, GAGE…AFLW, VFMG…IAVI, IVLF…MMQV, and QVVV…LSSL.

The protein belongs to the glycosyltransferase 4 family. MraY subfamily. Mg(2+) serves as cofactor.

Its subcellular location is the cell inner membrane. It carries out the reaction UDP-N-acetyl-alpha-D-muramoyl-L-alanyl-gamma-D-glutamyl-meso-2,6-diaminopimeloyl-D-alanyl-D-alanine + di-trans,octa-cis-undecaprenyl phosphate = di-trans,octa-cis-undecaprenyl diphospho-N-acetyl-alpha-D-muramoyl-L-alanyl-D-glutamyl-meso-2,6-diaminopimeloyl-D-alanyl-D-alanine + UMP. It functions in the pathway cell wall biogenesis; peptidoglycan biosynthesis. Functionally, catalyzes the initial step of the lipid cycle reactions in the biosynthesis of the cell wall peptidoglycan: transfers peptidoglycan precursor phospho-MurNAc-pentapeptide from UDP-MurNAc-pentapeptide onto the lipid carrier undecaprenyl phosphate, yielding undecaprenyl-pyrophosphoryl-MurNAc-pentapeptide, known as lipid I. The sequence is that of Phospho-N-acetylmuramoyl-pentapeptide-transferase from Polynucleobacter asymbioticus (strain DSM 18221 / CIP 109841 / QLW-P1DMWA-1) (Polynucleobacter necessarius subsp. asymbioticus).